A 386-amino-acid chain; its full sequence is MVARSPNAKPDRQKAAALAAAAALNPALLRETLKKVDRCMARLQELQYTVAGGAKVVSGVSLSPRSTRGYLRTSLRCKQETVRMRGGASAQKRSPSGKFGGGVGGEGAQWRRMSLPAMLLGETVLEIVQASQFARDIVTAAGATNREPPRTPKPAPRTRKPAAGEPTPLRARRAREKQSHRGGAATRGADAATPPSRSRVRSRIQFKPVSPVAVGRPSVSANRVSPKNRPWAKKAVMFPNPTFHASTSAATDPCATPSPSKKQKRLYKTRSPVAARQTPHKFLVKSPPSALGSKLRMHGKALPARPAAVSPPPPVKAQASPAKTRRCSFSPSRLATRLMSPIKARLSLGRSRDSGVGVGGGPMSGLKQRPGVSLTVRTVSSKISSR.

Disordered regions lie at residues 83–105 (RMRGGASAQKRSPSGKFGGGVGG), 140–202 (AAGA…RVRS), 244–266 (HASTSAATDPCATPSPSKKQKRL), 303–330 (PARPAAVSPPPPVKAQASPAKTRRCSFS), and 345–386 (RLSL…ISSR). The segment covering 170–180 (RARRAREKQSH) has biased composition (basic residues). The span at 181-193 (RGGAATRGADAAT) shows a compositional bias: low complexity. Residues 375–386 (TVRTVSSKISSR) are compositionally biased toward polar residues.

Expressed in vegetative shoot tips consisting of leaf primordia and the bases of immature leaves, the shoot apical meristem, and unexpanded stem tissue. Strongly expressed in tissues enriched in dividing cells: ear primordia and embryos.

The protein localises to the cytoplasm. It localises to the cytoskeleton. It is found in the spindle. The protein resides in the phragmoplast. Its function is as follows. Is required for spatial control cell division during leaf development. Through an association with microtubules, acts both for the positioning of cytoskeletal arrays that establish planes of cell division during prophase and for spatial guidance of expanding phragmoplasts toward preestablished cortical division sites (CDS) during cytokinesis. The sequence is that of Microtubule-binding protein TANGLED1 (TAN1) from Zea mays (Maize).